A 216-amino-acid chain; its full sequence is N-acetyltransferase 9-like protein (216 aa).

The N-acetyltransferase domain maps to 68-215 (VLLNENDEAK…DHVELELMRT (148 aa)).

It belongs to the acetyltransferase family. GNAT subfamily.

The protein resides in the cytoplasm. It localises to the nucleus. This chain is N-acetyltransferase 9-like protein, found in Schizosaccharomyces pombe (strain 972 / ATCC 24843) (Fission yeast).